We begin with the raw amino-acid sequence, 252 residues long: Cell division protein ZapD (252 aa).

Belongs to the ZapD family. Interacts with FtsZ.

It localises to the cytoplasm. Cell division factor that enhances FtsZ-ring assembly. Directly interacts with FtsZ and promotes bundling of FtsZ protofilaments, with a reduction in FtsZ GTPase activity. This chain is Cell division protein ZapD, found in Ralstonia nicotianae (strain ATCC BAA-1114 / GMI1000) (Ralstonia solanacearum).